A 247-amino-acid polypeptide reads, in one-letter code: Chymase (247 aa).

The N-terminal stretch at 1–17 (MCLLSLPLLLFLQYTRA) is a signal peptide. Residues 18–21 (KAGE) constitute a propeptide, activation peptide. A Peptidase S1 domain is found at 22 to 245 (VIGGTECKPH…YRPWINKILK (224 aa)). Cys51 and Cys67 are oxidised to a cystine. Catalysis depends on His66, which acts as the Charge relay system. N-linked (GlcNAc...) asparagine glycosylation is present at Asn103. Asp110 serves as the catalytic Charge relay system. The N-linked (GlcNAc...) asparagine glycan is linked to Asn121. 2 cysteine pairs are disulfide-bonded: Cys144–Cys209 and Cys175–Cys188. Ser203 functions as the Charge relay system in the catalytic mechanism.

The protein belongs to the peptidase S1 family. Granzyme subfamily.

The protein resides in the secreted. It localises to the cytoplasmic granule. It carries out the reaction Preferential cleavage: Phe-|-Xaa &gt; Tyr-|-Xaa &gt; Trp-|-Xaa &gt; Leu-|-Xaa.. In terms of biological role, major secreted protease of mast cells with suspected roles in vasoactive peptide generation, extracellular matrix degradation, and regulation of gland secretion. This is Chymase from Cavia porcellus (Guinea pig).